The sequence spans 843 residues: Axin-2 (843 aa).

The tract at residues 1-75 (MSSAMLVTCL…EGRASPDSPL (75 aa)) is disordered. The Tankyrase-binding motif motif lies at 21–30 (APRPPVPGEE). Over residues 56 to 69 (RRNEDGLGEPEGRA) the composition is skewed to basic and acidic residues. Residues 81–200 (SLHSLLGDQD…LTSDIYLEYV (120 aa)) enclose the RGS domain. The segment at 327–413 (VGSKKQLQRE…REGSELTLNS (87 aa)) is interaction with GSK3B. The interval 334 to 393 (QREMHRSVKANGQVSLPHFPRTHRLPKEMTPVEPATFAAELISRLEKLKLELESRHSLEE) is interaction with SIAH1 and SIAH2. Disordered stretches follow at residues 396–435 (QQIREDEEREGSELTLNSREGAPTQHPLSLLPSGSYEEDP), 447–494 (LKTP…AASP), 561–674 (APET…RTTP), and 718–748 (ASQQRDRNHSATVQTGATPFSNPSLAPEDHK). The tract at residues 413-476 (SREGAPTQHP…PDHHHHHHSQ (64 aa)) is interaction with beta-catenin. Composition is skewed to low complexity over residues 477–494 (YHSLLPPGGKLPPAAASP) and 588–597 (PGLALPAREG). The segment covering 727–741 (SATVQTGATPFSNPS) has biased composition (polar residues). The 83-residue stretch at 761-843 (ASELVVTYFF…RILGKVERID (83 aa)) folds into the DIX domain.

As to quaternary structure, interacts with glycogen synthase kinase-3 beta (GSK3B) and beta-catenin. The interaction between axin and beta-catenin occurs via the armadillo repeats contained in beta-catenin. Interacts with SMAD7 and RNF111. Interacts with ANKRD6. Interacts with SIAH1. Interacts with SIAH2. Probably phosphorylated by GSK3B and dephosphorylated by PP2A. In terms of processing, ADP-ribosylated by tankyrase TNKS and TNKS2. Poly-ADP-ribosylated protein is recognized by RNF146, followed by ubiquitination and subsequent activation of the Wnt signaling pathway. Post-translationally, ubiquitinated by RNF146 when poly-ADP-ribosylated, leading to its degradation and subsequent activation of the Wnt signaling pathway. Deubiquitinated by USP34, deubiquitinated downstream of beta-catenin stabilization step: deubiquitination is important Wnt signaling to positively regulate beta-catenin (CTNBB1)-mediated transcription. As to expression, expressed in brain and lymphoblast.

It localises to the cytoplasm. In terms of biological role, inhibitor of the Wnt signaling pathway. Down-regulates beta-catenin. Probably facilitate the phosphorylation of beta-catenin and APC by GSK3B. The protein is Axin-2 (AXIN2) of Homo sapiens (Human).